Reading from the N-terminus, the 600-residue chain is Long-chain-fatty-acid--CoA ligase FadD15 (600 aa).

The protein belongs to the ATP-dependent AMP-binding enzyme family.

The enzyme catalyses a long-chain fatty acid + ATP + CoA = a long-chain fatty acyl-CoA + AMP + diphosphate. It functions in the pathway lipid metabolism; fatty acid biosynthesis. Functionally, catalyzes the activation of long-chain fatty acids as acyl-coenzyme A (acyl-CoA), which are then transferred to the multifunctional polyketide synthase (PKS) type III for further chain extension. The protein is Long-chain-fatty-acid--CoA ligase FadD15 (fadD15) of Mycobacterium bovis (strain ATCC BAA-935 / AF2122/97).